Here is a 163-residue protein sequence, read N- to C-terminus: Centrosomal protein of 19 kDa (163 aa).

This sequence belongs to the CEP19 family. In terms of assembly, interacts with CEP43; this interaction is required for its localization to the mother centriole. Interacts (via residues 121-150) with RABL2B. Interacts (via C-terminus) with CEP350; this interaction is required for its localization to the mother centriole.

The protein localises to the cytoplasm. The protein resides in the cytoskeleton. Its subcellular location is the microtubule organizing center. It localises to the centrosome. It is found in the centriole. The protein localises to the spindle pole. The protein resides in the cilium basal body. Functionally, required for ciliation. Recruits the RABL2B GTPase to the ciliary base to initiate ciliation. After specifically capturing the activated GTP-bound RABL2B, the CEP19-RABL2B complex binds intraflagellar transport (IFT) complex B from the large pool pre-docked at the base of the cilium and thus triggers its entry into the cilia. Involved in the early steps in cilia formation by recruiting the ciliary vesicles (CVs) to the distal end of the mother centriole where they fuse to initiate cilium assembly. Involved in microtubule (MT) anchoring to the centrosomes. The protein is Centrosomal protein of 19 kDa (CEP19) of Homo sapiens (Human).